The primary structure comprises 262 residues: ATP synthase subunit a (262 aa).

Helical transmembrane passes span Thr-50–Lys-70, Met-107–Ile-127, Phe-141–Val-161, Leu-194–Ile-214, Val-218–Val-238, and Gln-239–Ala-259.

The protein belongs to the ATPase A chain family. In terms of assembly, F-type ATPases have 2 components, CF(1) - the catalytic core - and CF(0) - the membrane proton channel. CF(1) has five subunits: alpha(3), beta(3), gamma(1), delta(1), epsilon(1). CF(0) has three main subunits: a(1), b(2) and c(9-12). The alpha and beta chains form an alternating ring which encloses part of the gamma chain. CF(1) is attached to CF(0) by a central stalk formed by the gamma and epsilon chains, while a peripheral stalk is formed by the delta and b chains.

The protein resides in the cell membrane. Key component of the proton channel; it plays a direct role in the translocation of protons across the membrane. The chain is ATP synthase subunit a from Desulforamulus reducens (strain ATCC BAA-1160 / DSM 100696 / MI-1) (Desulfotomaculum reducens).